The following is a 458-amino-acid chain: Siroheme synthase (458 aa).

Residues 1–203 (MDYLPLFFDL…GNLAAAEQLI (203 aa)) form a precorrin-2 dehydrogenase /sirohydrochlorin ferrochelatase region. NAD(+) contacts are provided by residues 22–23 (TI) and 43–44 (PK). At Ser-128 the chain carries Phosphoserine. The tract at residues 216–458 (GEVYLVGAGP…RCHEKLNWYK (243 aa)) is uroporphyrinogen-III C-methyltransferase. Position 225 (Pro-225) interacts with S-adenosyl-L-methionine. Asp-248 acts as the Proton acceptor in catalysis. Lys-270 (proton donor) is an active-site residue. S-adenosyl-L-methionine-binding positions include 301 to 303 (GGD), Ile-306, 331 to 332 (TA), Met-383, and Gly-412.

It in the N-terminal section; belongs to the precorrin-2 dehydrogenase / sirohydrochlorin ferrochelatase family. This sequence in the C-terminal section; belongs to the precorrin methyltransferase family.

The enzyme catalyses uroporphyrinogen III + 2 S-adenosyl-L-methionine = precorrin-2 + 2 S-adenosyl-L-homocysteine + H(+). It carries out the reaction precorrin-2 + NAD(+) = sirohydrochlorin + NADH + 2 H(+). The catalysed reaction is siroheme + 2 H(+) = sirohydrochlorin + Fe(2+). Its pathway is cofactor biosynthesis; adenosylcobalamin biosynthesis; precorrin-2 from uroporphyrinogen III: step 1/1. It functions in the pathway cofactor biosynthesis; adenosylcobalamin biosynthesis; sirohydrochlorin from precorrin-2: step 1/1. It participates in porphyrin-containing compound metabolism; siroheme biosynthesis; precorrin-2 from uroporphyrinogen III: step 1/1. The protein operates within porphyrin-containing compound metabolism; siroheme biosynthesis; siroheme from sirohydrochlorin: step 1/1. Its pathway is porphyrin-containing compound metabolism; siroheme biosynthesis; sirohydrochlorin from precorrin-2: step 1/1. In terms of biological role, multifunctional enzyme that catalyzes the SAM-dependent methylations of uroporphyrinogen III at position C-2 and C-7 to form precorrin-2 via precorrin-1. Then it catalyzes the NAD-dependent ring dehydrogenation of precorrin-2 to yield sirohydrochlorin. Finally, it catalyzes the ferrochelation of sirohydrochlorin to yield siroheme. This is Siroheme synthase from Saccharophagus degradans (strain 2-40 / ATCC 43961 / DSM 17024).